The following is a 201-amino-acid chain: Glutathione peroxidase 1 (201 aa).

2 positions are modified to phosphoserine: Ser-7 and Ser-32. Residue Sec-47 is part of the active site. Position 47 (Sec-47) is a non-standard amino acid, selenocysteine. N6-acetyllysine; alternate is present on residues Lys-62, Lys-86, and Lys-112. Lys-62, Lys-86, and Lys-112 each carry N6-succinyllysine; alternate. Position 119 is an N6-acetyllysine (Lys-119). Lys-146 carries the N6-acetyllysine; alternate modification. N6-succinyllysine; alternate is present on Lys-146. At Ser-195 the chain carries Phosphoserine.

The protein belongs to the glutathione peroxidase family. As to quaternary structure, homotetramer. Interacts with MIEN1. Post-translationally, during periods of oxidative stress, Sec-47 may react with a superoxide radical, irreversibly lose hydroselenide and be converted to dehydroalanine. In terms of tissue distribution, expressed in liver, kidney, lung, brain and heart.

The protein localises to the cytoplasm. The protein resides in the mitochondrion. It carries out the reaction 2 glutathione + H2O2 = glutathione disulfide + 2 H2O. The catalysed reaction is a hydroperoxy polyunsaturated fatty acid + 2 glutathione = a hydroxy polyunsaturated fatty acid + glutathione disulfide + H2O. It catalyses the reaction tert-butyl hydroperoxide + 2 glutathione = tert-butanol + glutathione disulfide + H2O. The enzyme catalyses cumene hydroperoxide + 2 glutathione = 2-phenylpropan-2-ol + glutathione disulfide + H2O. It carries out the reaction (13S)-hydroperoxy-(9Z,11E)-octadecadienoate + 2 glutathione = (13S)-hydroxy-(9Z,11E)-octadecadienoate + glutathione disulfide + H2O. The catalysed reaction is (9S)-hydroperoxy-(10E,12Z)-octadecadienoate + 2 glutathione = (9S)-hydroxy-(10E,12Z)-octadecadienoate + glutathione disulfide + H2O. It catalyses the reaction (5S)-hydroperoxy-(6E,8Z,11Z,14Z)-eicosatetraenoate + 2 glutathione = (5S)-hydroxy-(6E,8Z,11Z,14Z)-eicosatetraenoate + glutathione disulfide + H2O. The enzyme catalyses (12S)-hydroperoxy-(5Z,8Z,10E,14Z)-eicosatetraenoate + 2 glutathione = (12S)-hydroxy-(5Z,8Z,10E,14Z)-eicosatetraenoate + glutathione disulfide + H2O. It carries out the reaction (12R)-hydroperoxy-(5Z,8Z,10E,14Z)-eicosatetraenoate + 2 glutathione = (12R)-hydroxy-(5Z,8Z,10E,14Z)-eicosatetraenoate + glutathione disulfide + H2O. The catalysed reaction is (15S)-hydroperoxy-(5Z,8Z,11Z,13E)-eicosatetraenoate + 2 glutathione = (15S)-hydroxy-(5Z,8Z,11Z,13E)-eicosatetraenoate + glutathione disulfide + H2O. It catalyses the reaction (5S)-hydroperoxy-(6E,8Z,11Z,14Z,17Z)-eicosapentaenoate + 2 glutathione = (5S)-hydroxy-(6E,8Z,11Z,14Z,17Z)-eicosapentaenoate + glutathione disulfide + H2O. The enzyme catalyses (12S)-hydroperoxy-(5Z,8Z,10E,14Z,17Z)-eicosapentaenoate + 2 glutathione = (12S)-hydroxy-(5Z,8Z,10E,14Z,17Z)-eicosapentaenoate + glutathione disulfide + H2O. It carries out the reaction (15S)-hydroperoxy-(5Z,8Z,11Z,13E,17Z)-eicosapentaenoate + 2 glutathione = (15S)-hydroxy-(5Z,8Z,11Z,13E,17Z)-eicosapentaenoate + glutathione disulfide + H2O. The catalysed reaction is (15S)-hydroperoxy-(11Z,13E)-eicosadienoate + 2 glutathione = (15S)-hydroxy-(11Z,13E)-eicosadienoate + glutathione disulfide + H2O. It catalyses the reaction (17S)-hydroperoxy-(4Z,7Z,10Z,13Z,15E,19Z)-docosahexaenoate + 2 glutathione = (17S)-hydroxy-(4Z,7Z,10Z,13Z,15E,19Z)-docosahexaenoate + glutathione disulfide + H2O. Functionally, catalyzes the reduction of hydroperoxides in a glutathione-dependent manner thus regulating cellular redox homeostasis. Can reduce small soluble hydroperoxides such as H2O2, cumene hydroperoxide and tert-butyl hydroperoxide, as well as several fatty acid-derived hydroperoxides. In platelets catalyzes the reduction of 12-hydroperoxyeicosatetraenoic acid, the primary product of the arachidonate 12-lipoxygenase pathway. This chain is Glutathione peroxidase 1, found in Mus musculus (Mouse).